We begin with the raw amino-acid sequence, 250 residues long: Menaquinol:cytochrome c reductase cytochrome c subunit (250 aa).

3 helical membrane passes run 46–62, 104–124, and 137–157; these read WLVGSVFLVGFLCLTVA, VIGAIVMPGLAFGALLLAPFL, and VATGMMLLTLAAIVYLTWESV. A Cytochrome c domain is found at 178-250; it reads DTNAEGYKIA…LQKMANSSPA (73 aa). 3 residues coordinate heme c: C192, C195, and H196. Residues 229–250 are disordered; that stretch reads MPGGIFKGTDEELQKMANSSPA.

This sequence belongs to the cytochrome b family. As to quaternary structure, the main subunits of the menaquinol:cytochrome c complex are a Rieske-type iron-sulfur protein (QcrA), a cytochrome b (QcrB) and a cytochrome c (QcrC). Requires heme c as cofactor.

It is found in the cell membrane. Functionally, component of the menaquinol:cytochrome c reductase complex. The polypeptide is Menaquinol:cytochrome c reductase cytochrome c subunit (qcrC) (Geobacillus thermodenitrificans).